The chain runs to 538 residues: Cytochrome P450 monooxygenase flvC (538 aa).

Residues threonine 17 to leucine 37 traverse the membrane as a helical segment. Cysteine 478 lines the heme pocket.

The protein belongs to the cytochrome P450 family. Heme is required as a cofactor.

It localises to the membrane. The catalysed reaction is pre-flavunoidine + reduced [NADPH--hemoprotein reductase] + O2 = 10-hydroxy-pre-flavunoidine + oxidized [NADPH--hemoprotein reductase] + H2O + H(+). Its pathway is secondary metabolite biosynthesis; terpenoid biosynthesis. Its function is as follows. Cytochrome P450 monooxygenase; part of the gene cluster that mediates the biosynthesis of flavunoidine, an alkaloidal terpenoid with a tetracyclic cage-like core connected to dimethylcadaverine via a C-N bond and acylated with 5,5-dimethyl-L-pipecolate. The tetracyclic core is synthesized by the terpene cyclase flvE and the cytochrome P450 monooxygenase flvD. The terpene cyclase flvE catalyzes the cyclization of farnesyl pyrophosphate (FPP) to form (1R,4R,5S)-(+)-acoradiene and the cytochrome P450 monooxygenase flvD is then responsible for oxidative conversion of (1R,4R,5S)-(+)-acoradiene into the tetracyclic cage present in the final product flavunoidine. In parallel, the N-methyltransferase flvH dimethylates L-lysine to give N,N-dimethyl-L-Lysin which is decarboxylated by flvG to afford dimethylcadaverine. The terpene cyclase-like protein flvF is the enzyme that attaches the dimethylcadaverine precusor at the C-7 of the tetracyclic cage to yield pre-flavunoidine. The cytochrome monooxygenase flvC hydroxylates the C-10 position of pre-flavunoidine whereas the NRPS flvI acylates the terpenoid core at the hydroxylated C-10 with dimethylpipecolate to yield final flavunoidine. The bifunctional enzyme flvA and the dehydrogenase flvB are responsible for the synthesis of the dimethylpipecolate precursor. The PLP-dependent lyase domain of flvA might use L-O-acetyl-homoserine and alpha-keto-isovalerate to form an intermediary ketone that can cyclize intramolecularly to yield an imine. The imine can be reduced by flvB to yield the 6-carboxylated pipecolate. The C-terminal alpha-KG-dependent oxygenase domain of flvA is then proposed to catalyze the decarboxylation to yield dimethylpipecolate. The protein is Cytochrome P450 monooxygenase flvC of Aspergillus flavus (strain ATCC 200026 / FGSC A1120 / IAM 13836 / NRRL 3357 / JCM 12722 / SRRC 167).